A 429-amino-acid polypeptide reads, in one-letter code: Glutamate-1-semialdehyde 2,1-aminomutase (429 aa).

Lys-265 carries the post-translational modification N6-(pyridoxal phosphate)lysine.

This sequence belongs to the class-III pyridoxal-phosphate-dependent aminotransferase family. HemL subfamily. In terms of assembly, homodimer. It depends on pyridoxal 5'-phosphate as a cofactor.

It is found in the cytoplasm. It carries out the reaction (S)-4-amino-5-oxopentanoate = 5-aminolevulinate. The protein operates within porphyrin-containing compound metabolism; protoporphyrin-IX biosynthesis; 5-aminolevulinate from L-glutamyl-tRNA(Glu): step 2/2. The polypeptide is Glutamate-1-semialdehyde 2,1-aminomutase (Azotobacter vinelandii (strain DJ / ATCC BAA-1303)).